A 2048-amino-acid polypeptide reads, in one-letter code: Fanconi anemia group M protein (2048 aa).

The span at 1 to 37 shows a compositional bias: polar residues; that stretch reads MSGRQRTLFQTWGSSISRSSGTPGCSSGTERPQSPGS. The interval 1 to 45 is disordered; sequence MSGRQRTLFQTWGSSISRSSGTPGCSSGTERPQSPGSSKAPLPAA. Ser34 bears the Phosphoserine mark. A Helicase ATP-binding domain is found at 98-266; it reads ISRAALFCNT…QVITNLLIGQ (169 aa). 111-118 serves as a coordination point for ATP; the sequence is LPTGLGKT. Residues 214–217 carry the DEAH box motif; it reads DEAH. The 176-residue stretch at 452-627 folds into the Helicase C-terminal domain; it reads KLEEVVIEHF…VLHFYQRSPR (176 aa). The interval 661–800 is interaction with CENPS/CENPSX; it reads SIFSYRDGMR…TSTFIAPRNE (140 aa). Disordered stretches follow at residues 1433–1476, 1518–1540, and 1668–1809; these read NVLN…NFPK, LSEE…EQDS, and ILPD…HTSL. Acidic residues predominate over residues 1518–1538; that stretch reads LSEEDAEYVSSDENDESENEQ. Residues Ser1673 and Ser1674 each carry the phosphoserine modification. 3 stretches are compositionally biased toward polar residues: residues 1703–1745, 1753–1767, and 1786–1797; these read HCLN…ISEV, HNEV…TTVD, and EDSSTSGASCSK. Residues 1727–2048 are interaction with FAAP24; that stretch reads LAKQSKQTSL…LNQDRLKSDI (322 aa).

This sequence belongs to the DEAD box helicase family. DEAH subfamily. FANCM sub-subfamily. As to quaternary structure, component of the Fanconi anemia (FA) core complex, which consists of CENPS, CENPX, FANCA, FANCB, FANCC, FANCE, FANCF, FANCG, FANCL, FANCM, FAAP24 and FAAP100. The FA core complex associates with Bloom syndrome (BLM) complex, which consists of at least BLM, DNA topoisomerase 3-alpha/TOP3A, RMI1/BLAP75, RPA1/RPA70 and RPA2/RPA32. This supercomplex between FA and BLM complexes has been called BRAFT. Forms a discrete complex with CENPS and CENPX, called FANCM-MHF; this interaction stimulates DNA binding and replication fork remodeling by FANCM and stabilizes the binding partners. Forms a heterodimer with FAAP24; this interaction increases FANCM single-stranded DNA-binding activity. Phosphorylated; hyperphosphorylated in response to genotoxic stress. Expressed in germ cells of fetal and adult ovaries. In fetal ovaries, it is present in oogonia but expression is stronger in pachytene stage oocytes. Expressed in oocytes arrested at the diplotene stage of prophase I during the last trimester of pregnancy and in adults. Expressed in the testis.

The protein localises to the nucleus. It carries out the reaction ATP + H2O = ADP + phosphate + H(+). In terms of biological role, DNA-dependent ATPase component of the Fanconi anemia (FA) core complex. Required for the normal activation of the FA pathway, leading to monoubiquitination of the FANCI-FANCD2 complex in response to DNA damage, cellular resistance to DNA cross-linking drugs, and prevention of chromosomal breakage. In complex with CENPS and CENPX, binds double-stranded DNA (dsDNA), fork-structured DNA (fsDNA) and Holliday junction substrates. Its ATP-dependent DNA branch migration activity can process branched DNA structures such as a movable replication fork. This activity is strongly stimulated in the presence of CENPS and CENPX. In complex with FAAP24, efficiently binds to single-strand DNA (ssDNA), splayed-arm DNA, and 3'-flap substrates. In vitro, on its own, strongly binds ssDNA oligomers and weakly fsDNA, but does not bind to dsDNA. This chain is Fanconi anemia group M protein (FANCM), found in Homo sapiens (Human).